Consider the following 245-residue polypeptide: Carboxy-S-adenosyl-L-methionine synthase (245 aa).

Residues tyrosine 42, 67–69 (GCS), 92–93 (DN), 120–121 (DI), asparagine 135, and arginine 202 each bind S-adenosyl-L-methionine.

This sequence belongs to the class I-like SAM-binding methyltransferase superfamily. Cx-SAM synthase family. As to quaternary structure, homodimer.

The catalysed reaction is prephenate + S-adenosyl-L-methionine = carboxy-S-adenosyl-L-methionine + 3-phenylpyruvate + H2O. Its function is as follows. Catalyzes the conversion of S-adenosyl-L-methionine (SAM) to carboxy-S-adenosyl-L-methionine (Cx-SAM). In Vibrio parahaemolyticus serotype O3:K6 (strain RIMD 2210633), this protein is Carboxy-S-adenosyl-L-methionine synthase.